Consider the following 238-residue polypeptide: Large ribosomal subunit protein uL1 (238 aa).

Belongs to the universal ribosomal protein uL1 family. As to quaternary structure, part of the 50S ribosomal subunit.

Functionally, binds directly to 23S rRNA. The L1 stalk is quite mobile in the ribosome, and is involved in E site tRNA release. Its function is as follows. Protein L1 is also a translational repressor protein, it controls the translation of the L11 operon by binding to its mRNA. This Saccharopolyspora erythraea (strain ATCC 11635 / DSM 40517 / JCM 4748 / NBRC 13426 / NCIMB 8594 / NRRL 2338) protein is Large ribosomal subunit protein uL1.